Reading from the N-terminus, the 265-residue chain is MKRLLVTGAAGQLGRVMRERLAPMAEILRLADLSPLDPAGPNEECVQCDLADANAVNAMVAGCDGIVHLGGISVEKPFEQILQGNIIGLYNLYEAARAHGQPRIVFASSNHTIGYYPQTERLGPDVPARPDGLYGVSKCFGENLARMYFDKFGQETALVRIGSCTPEPNNYRMLSTWFSHDDFVSLIEAVFRAPVLGCPVVWGASANDAGWWDNSHLGFLGWKPKDNAEAFRRHITETTPPPDPNDALVRFQGGTFVDNPIFKQS.

NAD(+)-binding positions include 12 to 13, 32 to 34, 49 to 50, and 69 to 73; these read QL, DLS, DL, and LGGIS. Substrate is bound by residues Ser73 and 109–111; that span reads SNH. The Proton acceptor role is filled by Tyr134. NAD(+) is bound at residue Lys138. Position 163 (Ser163) interacts with substrate. Cys164 is an NAD(+) binding site. Arg172 provides a ligand contact to substrate.

This sequence belongs to the NAD(P)-dependent epimerase/dehydratase family. In terms of assembly, homohexamer.

It catalyses the reaction beta-D-galacturonate + NAD(+) = D-galactaro-1,5-lactone + NADH + H(+). It carries out the reaction beta-D-glucuronate + NAD(+) = D-glucaro-1,5-lactone + NADH + H(+). It functions in the pathway carbohydrate acid metabolism; D-galacturonate degradation via prokaryotic oxidative pathway. Functionally, catalyzes the oxidation of D-galacturonate and D-glucuronate to galactarate and D-glucarate, respectively. In fact, in water solution the substrate D-galacturonate is predominantly in pyranosic form whose beta anomer is converted by the enzyme to D-galactaro-1,5-lactone; in solution, this reaction product rearranges to the more stable D-galactaro-1,4-lactone. Makes part of the oxidative degradation pathway of D-galacturonate, which allows A.tumefaciens to utilize D-galacturonate as a sole carbon source. Cannot use NADP(+) instead of NAD(+) as cosubstrate. Is not active on D-galactose, D-glucose, D-galactonate and D-gluconate. This Agrobacterium fabrum (strain C58 / ATCC 33970) (Agrobacterium tumefaciens (strain C58)) protein is Uronate dehydrogenase (udh).